A 542-amino-acid chain; its full sequence is MAKDIKFNLDARDLLKKGVDELADAVKVTLGPKGRNVIIDKKFGAPQITKDGVTVAKEIELSDHFQNMGAQLVKEVASKTNDNAGDGTTTATVLAQSIINVGMKNVAAGANPMDLKRGIDKAVAKVVESLKKQSRAVGDDFGKIENVAKISANGDETIGSLIAEAMKKVKKEGVITIEESKGIETYVDVVEGMQFDRGYISSYFVTNTDKMEADLENPYILIHDKKISVLKDILPILEKTIQTGRPMLIIAEDIESEALATLVVNRLRGSLKVCAVKAPGFGDRRKEMLEDIAVLTGGVVISEEKGLKLEGVTIDMLGTAEKVTISKDNTVIVNGAGEKSAISARVSQIKTQIEKTTSDYDSEKLQERLAKLAGGVAVLYVGAPSEVEMKEKKDRVDDALSATRAAIEEGTVPGGGVAYVRAISILEGFKGINEDETTGIEIVKRAIEEPLRQIVENAGKEGAVIAQRVKEEKDDFGYNARTGIYEDLYVAGVIDPTKVARVALENAASIAGMLLTTECVITEVKEENPAPAMPPMGGGGMM.

ATP contacts are provided by residues 29–32 (TLGP), K50, 86–90 (DGTTT), G415, and D495.

The protein belongs to the chaperonin (HSP60) family. As to quaternary structure, forms a cylinder of 14 subunits composed of two heptameric rings stacked back-to-back. Interacts with the co-chaperonin GroES.

It localises to the cytoplasm. It catalyses the reaction ATP + H2O + a folded polypeptide = ADP + phosphate + an unfolded polypeptide.. Functionally, together with its co-chaperonin GroES, plays an essential role in assisting protein folding. The GroEL-GroES system forms a nano-cage that allows encapsulation of the non-native substrate proteins and provides a physical environment optimized to promote and accelerate protein folding. The polypeptide is Chaperonin GroEL (Azobacteroides pseudotrichonymphae genomovar. CFP2).